The following is a 929-amino-acid chain: uncharacterized protein (929 aa).

The segment at 1–257 (MARKGKVNTL…SVLSSDDNDS (257 aa)) is disordered. A compositionally biased stretch (basic and acidic residues) spans 23 to 34 (KQLENKILHSYE). Acidic residues-rich tracts occupy residues 35-50 (EESA…DNDE), 59-75 (SEDD…DEED), 107-117 (LNEEDDSDDSV), 133-144 (DENELVDLDTLL), and 188-220 (SESE…DGEN). Phosphoserine occurs at positions 251, 555, and 557. The tract at residues 602-729 (DEMQAFEDEL…KADKKNHKLK (128 aa)) is disordered. Over residues 605–619 (QAFEDELAGVPNEDD) the composition is skewed to acidic residues. The segment covering 670 to 681 (NKPEMKEGQKKA) has biased composition (basic and acidic residues). A compositionally biased stretch (polar residues) spans 696–711 (ETNPWLQVPDQRTSSA). A compositionally biased stretch (basic and acidic residues) spans 712-729 (KKLDKNSSKADKKNHKLK). S758, S760, and S764 each carry phosphoserine. The span at 805–820 (KEDWVQEDAPKEEDHS) shows a compositional bias: basic and acidic residues. Positions 805-843 (KEDWVQEDAPKEEDHSLPGWGSWGGVGVKQRKTKPKVKK) are disordered. Positions 833–843 (KQRKTKPKVKK) are enriched in basic residues.

This sequence to yeast YML093w.

It localises to the nucleus. Its subcellular location is the nucleolus. This is an uncharacterized protein from Schizosaccharomyces pombe (strain 972 / ATCC 24843) (Fission yeast).